The following is a 304-amino-acid chain: Aspartate carbamoyltransferase catalytic subunit (304 aa).

Residues Arg55 and Thr56 each contribute to the carbamoyl phosphate site. Residue Lys83 coordinates L-aspartate. Positions 105, 133, and 136 each coordinate carbamoyl phosphate. Arg166 and Arg220 together coordinate L-aspartate. Carbamoyl phosphate is bound by residues Gly261 and Pro262.

This sequence belongs to the aspartate/ornithine carbamoyltransferase superfamily. ATCase family. As to quaternary structure, heterododecamer (2C3:3R2) of six catalytic PyrB chains organized as two trimers (C3), and six regulatory PyrI chains organized as three dimers (R2).

It carries out the reaction carbamoyl phosphate + L-aspartate = N-carbamoyl-L-aspartate + phosphate + H(+). It functions in the pathway pyrimidine metabolism; UMP biosynthesis via de novo pathway; (S)-dihydroorotate from bicarbonate: step 2/3. Its function is as follows. Catalyzes the condensation of carbamoyl phosphate and aspartate to form carbamoyl aspartate and inorganic phosphate, the committed step in the de novo pyrimidine nucleotide biosynthesis pathway. The polypeptide is Aspartate carbamoyltransferase catalytic subunit (Caldanaerobacter subterraneus subsp. tengcongensis (strain DSM 15242 / JCM 11007 / NBRC 100824 / MB4) (Thermoanaerobacter tengcongensis)).